We begin with the raw amino-acid sequence, 202 residues long: Recombination protein RecR (202 aa).

The C4-type zinc-finger motif lies at 56–71; that stretch reads CVVCGTVSDKEHCRIC. The 101-residue stretch at 79–179 folds into the Toprim domain; that stretch reads TVICVVEEPK…TVSRLASGLP (101 aa).

The protein belongs to the RecR family.

Functionally, may play a role in DNA repair. It seems to be involved in an RecBC-independent recombinational process of DNA repair. It may act with RecF and RecO. The polypeptide is Recombination protein RecR (Rhodococcus jostii (strain RHA1)).